We begin with the raw amino-acid sequence, 556 residues long: 2-succinyl-5-enolpyruvyl-6-hydroxy-3-cyclohexene-1-carboxylate synthase (556 aa).

The protein belongs to the TPP enzyme family. MenD subfamily. In terms of assembly, homodimer. It depends on Mg(2+) as a cofactor. Requires Mn(2+) as cofactor. Thiamine diphosphate serves as cofactor.

It carries out the reaction isochorismate + 2-oxoglutarate + H(+) = 5-enolpyruvoyl-6-hydroxy-2-succinyl-cyclohex-3-ene-1-carboxylate + CO2. It functions in the pathway quinol/quinone metabolism; 1,4-dihydroxy-2-naphthoate biosynthesis; 1,4-dihydroxy-2-naphthoate from chorismate: step 2/7. It participates in quinol/quinone metabolism; menaquinone biosynthesis. Functionally, catalyzes the thiamine diphosphate-dependent decarboxylation of 2-oxoglutarate and the subsequent addition of the resulting succinic semialdehyde-thiamine pyrophosphate anion to isochorismate to yield 2-succinyl-5-enolpyruvyl-6-hydroxy-3-cyclohexene-1-carboxylate (SEPHCHC). The sequence is that of 2-succinyl-5-enolpyruvyl-6-hydroxy-3-cyclohexene-1-carboxylate synthase from Escherichia coli (strain SMS-3-5 / SECEC).